Here is a 280-residue protein sequence, read N- to C-terminus: Shikimate dehydrogenase (NADP(+)) (280 aa).

Shikimate contacts are provided by residues 23 to 25 (SLS) and T70. The active-site Proton acceptor is the K74. Shikimate is bound by residues N95 and D111. NADP(+) contacts are provided by residues 135-139 (GSGGA), 158-163 (NRTISK), and I221. Shikimate is bound at residue Y223. G247 contacts NADP(+).

The protein belongs to the shikimate dehydrogenase family. As to quaternary structure, homodimer.

It catalyses the reaction shikimate + NADP(+) = 3-dehydroshikimate + NADPH + H(+). The protein operates within metabolic intermediate biosynthesis; chorismate biosynthesis; chorismate from D-erythrose 4-phosphate and phosphoenolpyruvate: step 4/7. Functionally, involved in the biosynthesis of the chorismate, which leads to the biosynthesis of aromatic amino acids. Catalyzes the reversible NADPH linked reduction of 3-dehydroshikimate (DHSA) to yield shikimate (SA). The chain is Shikimate dehydrogenase (NADP(+)) from Buchnera aphidicola subsp. Cinara cedri (strain Cc).